A 206-amino-acid chain; its full sequence is Crossover junction endodeoxyribonuclease RuvC (206 aa).

Residues aspartate 7, glutamate 67, and aspartate 138 contribute to the active site. Positions 7, 67, and 138 each coordinate Mg(2+).

It belongs to the RuvC family. Homodimer which binds Holliday junction (HJ) DNA. The HJ becomes 2-fold symmetrical on binding to RuvC with unstacked arms; it has a different conformation from HJ DNA in complex with RuvA. In the full resolvosome a probable DNA-RuvA(4)-RuvB(12)-RuvC(2) complex forms which resolves the HJ. It depends on Mg(2+) as a cofactor.

The protein localises to the cytoplasm. The enzyme catalyses Endonucleolytic cleavage at a junction such as a reciprocal single-stranded crossover between two homologous DNA duplexes (Holliday junction).. In terms of biological role, the RuvA-RuvB-RuvC complex processes Holliday junction (HJ) DNA during genetic recombination and DNA repair. Endonuclease that resolves HJ intermediates. Cleaves cruciform DNA by making single-stranded nicks across the HJ at symmetrical positions within the homologous arms, yielding a 5'-phosphate and a 3'-hydroxyl group; requires a central core of homology in the junction. The consensus cleavage sequence is 5'-(A/T)TT(C/G)-3'. Cleavage occurs on the 3'-side of the TT dinucleotide at the point of strand exchange. HJ branch migration catalyzed by RuvA-RuvB allows RuvC to scan DNA until it finds its consensus sequence, where it cleaves and resolves the cruciform DNA. The sequence is that of Crossover junction endodeoxyribonuclease RuvC from Anaeromyxobacter sp. (strain Fw109-5).